The sequence spans 321 residues: Putative pyridoxal kinase (321 aa).

Residues serine 23 and tyrosine 144 each contribute to the substrate site. ATP is bound by residues 203-204 (TS) and 230-242 (TFPR…VGTG). Aspartate 243 contributes to the substrate binding site.

The protein belongs to the pyridoxine kinase family. Zn(2+) serves as cofactor. Mg(2+) is required as a cofactor.

It carries out the reaction pyridoxal + ATP = pyridoxal 5'-phosphate + ADP + H(+). Its function is as follows. Required for synthesis of pyridoxal-5-phosphate from vitamin B6. This Caenorhabditis elegans protein is Putative pyridoxal kinase.